A 218-amino-acid polypeptide reads, in one-letter code: Uracil-DNA glycosylase (218 aa).

The active-site Proton acceptor is aspartate 68.

Belongs to the uracil-DNA glycosylase (UDG) superfamily. UNG family. As to quaternary structure, homodimer. Interacts with protein OPG148. Component of the Uracil-DNA glycosylase(UDG)-OPG148-polymerase complex; OPG148 and UDG form a heterodimeric processivity factor that associates with OPG71 to form the processive polymerase holoenzyme.

The catalysed reaction is Hydrolyzes single-stranded DNA or mismatched double-stranded DNA and polynucleotides, releasing free uracil.. Its function is as follows. Plays an essential role in viral replication as a component of the DNA polymerase processivity factor. Excises uracil residues from the DNA which can arise as a result of misincorporation of dUMP residues by DNA polymerase or due to deamination of cytosine. The sequence is that of Uracil-DNA glycosylase (OPG116) from Homo sapiens (Human).